The primary structure comprises 170 residues: uncharacterized protein (170 aa).

This is an uncharacterized protein from Arabidopsis thaliana (Mouse-ear cress).